The sequence spans 340 residues: DNA-directed RNA polymerase subunit alpha (340 aa).

The alpha N-terminal domain (alpha-NTD) stretch occupies residues 1 to 236; the sequence is MLSLSKNWNT…EQLQLFISFE (236 aa). Residues 251 to 340 form an alpha C-terminal domain (alpha-CTD) region; that stretch reads FSPYLLKRVD…LSKRYEDSYN (90 aa).

This sequence belongs to the RNA polymerase alpha chain family. Homodimer. The RNAP catalytic core consists of 2 alpha, 1 beta, 1 beta' and 1 omega subunit. When a sigma factor is associated with the core the holoenzyme is formed, which can initiate transcription.

It catalyses the reaction RNA(n) + a ribonucleoside 5'-triphosphate = RNA(n+1) + diphosphate. In terms of biological role, DNA-dependent RNA polymerase catalyzes the transcription of DNA into RNA using the four ribonucleoside triphosphates as substrates. The chain is DNA-directed RNA polymerase subunit alpha from Rickettsia akari (strain Hartford).